Reading from the N-terminus, the 264-residue chain is Regulatory protein RecX (264 aa).

This sequence belongs to the RecX family.

The protein localises to the cytoplasm. Functionally, modulates RecA activity. The chain is Regulatory protein RecX from Limosilactobacillus reuteri (strain DSM 20016) (Lactobacillus reuteri).